Reading from the N-terminus, the 685-residue chain is Methionine--tRNA ligase (685 aa).

The 'HIGH' region signature appears at 12 to 22 (PYANGSIHLGH). Cysteine 143, cysteine 146, cysteine 156, and cysteine 159 together coordinate Zn(2+). The short motif at 339–343 (KMSKS) is the 'KMSKS' region element. Position 342 (lysine 342) interacts with ATP. The region spanning 582–685 (DFMKIDMRVA…TGAQPGDKVG (104 aa)) is the tRNA-binding domain.

The protein belongs to the class-I aminoacyl-tRNA synthetase family. MetG type 1 subfamily. Homodimer. Zn(2+) is required as a cofactor.

It is found in the cytoplasm. The enzyme catalyses tRNA(Met) + L-methionine + ATP = L-methionyl-tRNA(Met) + AMP + diphosphate. Is required not only for elongation of protein synthesis but also for the initiation of all mRNA translation through initiator tRNA(fMet) aminoacylation. This Neisseria meningitidis serogroup B (strain ATCC BAA-335 / MC58) protein is Methionine--tRNA ligase.